The chain runs to 735 residues: Transcription factor RFX4 (735 aa).

The segment at 25–59 (SESKRFSSHSSIGNISNDENEEKENNRASKPHSTP) is disordered. A DNA-binding region spans residues 44 to 126 (NEEKENNRAS…RRLGTRGQSK (83 aa)). A DNA-binding region (RFX-type winged-helix) is located at residues 61–136 (TLQWLEENYE…YHYYGIAVKE (76 aa)). The interval 315–487 (RFSQILKRQT…NELMRAMKGE (173 aa)) is necessary for dimerization.

The protein belongs to the RFX family.

It localises to the nucleus. Its function is as follows. May activate transcription by interacting directly with the X-box. This is Transcription factor RFX4 (rfx4) from Danio rerio (Zebrafish).